The following is a 183-amino-acid chain: Peptide deformylase (183 aa).

Positions 110 and 153 each coordinate Fe cation. The active site involves Glu154. A Fe cation-binding site is contributed by His157.

The protein belongs to the polypeptide deformylase family. The cofactor is Fe(2+).

The catalysed reaction is N-terminal N-formyl-L-methionyl-[peptide] + H2O = N-terminal L-methionyl-[peptide] + formate. In terms of biological role, removes the formyl group from the N-terminal Met of newly synthesized proteins. Requires at least a dipeptide for an efficient rate of reaction. N-terminal L-methionine is a prerequisite for activity but the enzyme has broad specificity at other positions. This chain is Peptide deformylase, found in Oceanobacillus iheyensis (strain DSM 14371 / CIP 107618 / JCM 11309 / KCTC 3954 / HTE831).